We begin with the raw amino-acid sequence, 162 residues long: uncharacterized protein (162 aa).

A run of 3 helical transmembrane segments spans residues 28 to 50 (ALAL…VCFF), 57 to 76 (LLLL…DPWL), and 108 to 130 (YNTM…YALA).

It localises to the cell membrane. This is an uncharacterized protein from Treponema pallidum (strain Nichols).